The chain runs to 594 residues: MKNIRNFSIIAHIDHGKSTLSDRFIQVCNGLSEREMKEQVLDSMDIERERGITIKAQSVTLDYTARDGQTYQLNFIDTPGHVDFSYEVSRSLAACEGALLVVDAAQGVEAQTVANCYTAIEQNLEVIPILNKIDLPFAEPDRVAQEIEEIIGIDATGATTCSAKIGIGVEDVLETIVAKVPAPEGDVNAKLQALIIDSWFDNYLGVVSLVRVKNGTIKKGEKFKVMSTGVAYQVDRLGVFTPKMKDLDHLKAGEVGFIVAGIKDIHGAPVGDTLTHAHNPTDKPVPGFKKVQPQVYAGMFTISSDDYPDFREALEKLSLNDASLFFEPEVSQALGFGFRCGFLGMLHMEIIQERLEREYNLDLITSAPTVVYKAIKKDGEIIEVDNLSKLPEPGAIAEIQEPIVRANILVPKDYVGSVITICIEKRGVQVDLNYVGNQVSITYDLPMIEVVSDFFDTLKSVTKGYGSLDYELIRYEPANMVCLDVLINGDKVDALASIVHKDQAKYKGRELVERLKELIPRQMFEVAIQAAIGGTIVARSTVKALRKNVLAKCYGGDVSRKKKLLEKQKEGKKRMKNIGSVEIPQEAFLSVLKK.

The tr-type G domain occupies 2 to 184 (KNIRNFSIIA…TIVAKVPAPE (183 aa)). GTP is bound by residues 14–19 (DHGKST) and 131–134 (NKID).

Belongs to the TRAFAC class translation factor GTPase superfamily. Classic translation factor GTPase family. LepA subfamily.

The protein resides in the cell inner membrane. The enzyme catalyses GTP + H2O = GDP + phosphate + H(+). Functionally, required for accurate and efficient protein synthesis under certain stress conditions. May act as a fidelity factor of the translation reaction, by catalyzing a one-codon backward translocation of tRNAs on improperly translocated ribosomes. Back-translocation proceeds from a post-translocation (POST) complex to a pre-translocation (PRE) complex, thus giving elongation factor G a second chance to translocate the tRNAs correctly. Binds to ribosomes in a GTP-dependent manner. This is Elongation factor 4 from Francisella tularensis subsp. holarctica (strain FTNF002-00 / FTA).